Reading from the N-terminus, the 208-residue chain is Uracil phosphoribosyltransferase (208 aa).

5-phospho-alpha-D-ribose 1-diphosphate is bound by residues Arg-78, Arg-103, and 130 to 138 (DPMLAIGGS). Residues Ile-193 and 198-200 (GDA) contribute to the uracil site. Residue Asp-199 coordinates 5-phospho-alpha-D-ribose 1-diphosphate.

This sequence belongs to the UPRTase family. The cofactor is Mg(2+).

It carries out the reaction UMP + diphosphate = 5-phospho-alpha-D-ribose 1-diphosphate + uracil. It functions in the pathway pyrimidine metabolism; UMP biosynthesis via salvage pathway; UMP from uracil: step 1/1. With respect to regulation, allosterically activated by GTP. Functionally, catalyzes the conversion of uracil and 5-phospho-alpha-D-ribose 1-diphosphate (PRPP) to UMP and diphosphate. This Vibrio cholerae serotype O1 (strain ATCC 39315 / El Tor Inaba N16961) protein is Uracil phosphoribosyltransferase.